The chain runs to 174 residues: Adenine phosphoribosyltransferase (174 aa).

It belongs to the purine/pyrimidine phosphoribosyltransferase family. In terms of assembly, homodimer.

The protein localises to the cytoplasm. The enzyme catalyses AMP + diphosphate = 5-phospho-alpha-D-ribose 1-diphosphate + adenine. It participates in purine metabolism; AMP biosynthesis via salvage pathway; AMP from adenine: step 1/1. Catalyzes a salvage reaction resulting in the formation of AMP, that is energically less costly than de novo synthesis. The protein is Adenine phosphoribosyltransferase of Mycobacterium sp. (strain JLS).